Consider the following 199-residue polypeptide: Sulfocyanin (199 aa).

A helical; Signal-anchor for type II membrane protein membrane pass occupies residues V7–V27. A Plastocyanin-like domain is found at N79–S188. Residues H110, C171, H176, and M181 each contribute to the Cu cation site.

This sequence belongs to the multicopper oxidase family.

Its subcellular location is the cell membrane. The 4 redox proteins SoxE, SoxF, SoxG and SoxH probably form part of a membrane respiratory complex together with SoxM, a catalytic subunit of cytochrome oxidase. The protein is Sulfocyanin (soxE) of Sulfolobus acidocaldarius (strain ATCC 33909 / DSM 639 / JCM 8929 / NBRC 15157 / NCIMB 11770).